We begin with the raw amino-acid sequence, 177 residues long: Large ribosomal subunit protein uL6 (177 aa).

This sequence belongs to the universal ribosomal protein uL6 family. In terms of assembly, part of the 50S ribosomal subunit.

This protein binds to the 23S rRNA, and is important in its secondary structure. It is located near the subunit interface in the base of the L7/L12 stalk, and near the tRNA binding site of the peptidyltransferase center. The protein is Large ribosomal subunit protein uL6 of Salmonella newport (strain SL254).